A 56-amino-acid chain; its full sequence is Bdellin B-3 (56 aa).

Positions 1–42 (DTECVCTKELHRVCGSDGVTYDNECLATCHGASVAHDHACEG) constitute a Kazal-like domain. 3 cysteine pairs are disulfide-bonded: Cys4–Cys29, Cys6–Cys25, and Cys14–Cys40.

Its function is as follows. Proteinase inhibitor. Blocks the activity of trypsin, plasmin and sperm acrosin. This Hirudo medicinalis (Medicinal leech) protein is Bdellin B-3.